The chain runs to 215 residues: Short neuropeptide F (215 aa).

A signal peptide spans 1-22; the sequence is MCRINFTTLSLILVLWSGSLMS. The propeptide occupies 23 to 56; that stretch reads EPSQNADGSIKGLYEYLLQREYAAPVSYADHQIK. Phe-69 and Phe-101 each carry phenylalanine amide. A Tryptophan amide modification is found at Trp-129. Position 157 is a phenylalanine amide (Phe-157). The propeptide occupies 160-215; sequence SDPSWAMFNEHQLDEQQFADATRQPSKTLRGDEPTSIESTEQVESEENSPSNMDEK. The interval 173–215 is disordered; it reads DEQQFADATRQPSKTLRGDEPTSIESTEQVESEENSPSNMDEK.

Belongs to the NPY family.

It localises to the secreted. Its function is as follows. Plays a role in controlling food intake and regulating body size. The chain is Short neuropeptide F from Aedes aegypti (Yellowfever mosquito).